The primary structure comprises 376 residues: D-alanine--D-alanine ligase (376 aa).

One can recognise an ATP-grasp domain in the interval 153–366 (KLLLAGQGLP…YPELVHRLIQ (214 aa)). ATP is bound at residue 185 to 240 (VEALGYPVFVKPARAGSSIGITRVTSREGLAAAVAEAVSHDPKVVVEAALVGREIE). 3 residues coordinate Mg(2+): Asp317, Glu333, and Asn335.

It belongs to the D-alanine--D-alanine ligase family. Requires Mg(2+) as cofactor. The cofactor is Mn(2+).

The protein resides in the cytoplasm. It carries out the reaction 2 D-alanine + ATP = D-alanyl-D-alanine + ADP + phosphate + H(+). Its pathway is cell wall biogenesis; peptidoglycan biosynthesis. Functionally, cell wall formation. This chain is D-alanine--D-alanine ligase, found in Kineococcus radiotolerans (strain ATCC BAA-149 / DSM 14245 / SRS30216).